The chain runs to 168 residues: Cytochrome c-type biogenesis protein CcmE (168 aa).

Residues 1–7 (MTRKQRR) lie on the Cytoplasmic side of the membrane. The chain crosses the membrane as a helical; Signal-anchor for type II membrane protein span at residues 8-28 (LMLIGVCGAVLAVALGLVLWA). At 29 to 168 (MRGTIVFFRS…SGEKPALRQQ (140 aa)) the chain is on the periplasmic side. Residues His122 and Tyr126 each coordinate heme. The segment at 134–168 (ALKKQGHWQGEAKHPGGTAPAPQTASGEKPALRQQ) is disordered.

It belongs to the CcmE/CycJ family.

The protein localises to the cell inner membrane. Heme chaperone required for the biogenesis of c-type cytochromes. Transiently binds heme delivered by CcmC and transfers the heme to apo-cytochromes in a process facilitated by CcmF and CcmH. The protein is Cytochrome c-type biogenesis protein CcmE of Methylobacterium nodulans (strain LMG 21967 / CNCM I-2342 / ORS 2060).